The primary structure comprises 150 residues: Small ribosomal subunit protein uS19y (150 aa).

This sequence belongs to the universal ribosomal protein uS19 family.

It is found in the cytoplasm. This is Small ribosomal subunit protein uS19y (RPS15C) from Arabidopsis thaliana (Mouse-ear cress).